A 445-amino-acid polypeptide reads, in one-letter code: 3-phosphoshikimate 1-carboxyvinyltransferase (445 aa).

The interval 1-25 is disordered; the sequence is MTDSNQPTPLQARKSGALHGTARVP. The 3-phosphoshikimate site is built by Lys-28, Ser-29, and Arg-33. Phosphoenolpyruvate is bound at residue Lys-28. Phosphoenolpyruvate-binding residues include Gly-101 and Arg-129. Positions 175, 177, 328, and 355 each coordinate 3-phosphoshikimate. A phosphoenolpyruvate-binding site is contributed by Gln-177. The Proton acceptor role is filled by Asp-328. The phosphoenolpyruvate site is built by Arg-359 and Arg-402.

This sequence belongs to the EPSP synthase family. In terms of assembly, monomer.

It is found in the cytoplasm. The enzyme catalyses 3-phosphoshikimate + phosphoenolpyruvate = 5-O-(1-carboxyvinyl)-3-phosphoshikimate + phosphate. It participates in metabolic intermediate biosynthesis; chorismate biosynthesis; chorismate from D-erythrose 4-phosphate and phosphoenolpyruvate: step 6/7. Functionally, catalyzes the transfer of the enolpyruvyl moiety of phosphoenolpyruvate (PEP) to the 5-hydroxyl of shikimate-3-phosphate (S3P) to produce enolpyruvyl shikimate-3-phosphate and inorganic phosphate. The protein is 3-phosphoshikimate 1-carboxyvinyltransferase of Rhodopseudomonas palustris (strain TIE-1).